We begin with the raw amino-acid sequence, 115 residues long: MASPGFHRPSGRSQHVCMRITIRSHKKMRRYSILRSFFSLGLIACFCIFLIIVLSEEPNMRLLYKLSYGYVKILNNVKLLESIASCIRCGRITSVNDLNQFVFQSTAVFFTNKTD.

Residues 36–56 (SFFSLGLIACFCIFLIIVLSE) form a helical membrane-spanning segment.

The protein resides in the membrane. This is an uncharacterized protein from Saccharomyces cerevisiae (strain ATCC 204508 / S288c) (Baker's yeast).